Reading from the N-terminus, the 389-residue chain is Major outer membrane porin (389 aa).

This sequence belongs to the chlamydial porin (CP) (TC 1.B.2) family. In terms of assembly, part of a disulfide cross-linked outer membrane complex (COMC) composed of the major outer membrane porin (MOMP), the small cysteine-rich protein (OmcA) and the large cysteine-rich periplasmic protein (OmcB).

Its subcellular location is the cell outer membrane. Functionally, in elementary bodies (EBs, the infectious stage, which is able to survive outside the host cell) provides the structural integrity of the outer envelope through disulfide cross-links with the small cysteine-rich protein and the large cysteine-rich periplasmic protein. It has been described in publications as the Sarkosyl-insoluble COMC (Chlamydia outer membrane complex), and serves as the functional equivalent of peptidoglycan. Its function is as follows. Permits diffusion of specific solutes through the outer membrane. This chain is Major outer membrane porin (ompA), found in Chlamydia pneumoniae (Chlamydophila pneumoniae).